The sequence spans 660 residues: DNA mismatch repair protein MutL (660 aa).

Residues 414 to 433 are disordered; it reads SSVKHASRPQNTFTETDHPN.

This sequence belongs to the DNA mismatch repair MutL/HexB family.

This protein is involved in the repair of mismatches in DNA. It is required for dam-dependent methyl-directed DNA mismatch repair. May act as a 'molecular matchmaker', a protein that promotes the formation of a stable complex between two or more DNA-binding proteins in an ATP-dependent manner without itself being part of a final effector complex. The polypeptide is DNA mismatch repair protein MutL (Streptococcus pyogenes serotype M5 (strain Manfredo)).